A 216-amino-acid chain; its full sequence is Somatotropin (216 aa).

Positions 1-26 (MAAGSWTAGLLAFALLCLPWPQEASA) are cleaved as a signal peptide. Histidine 45 is a Zn(2+) binding site. A disulfide bridge links cysteine 78 with cysteine 189. Phosphoserine is present on serine 131. Glutamate 198 serves as a coordination point for Zn(2+). An intrachain disulfide couples cysteine 206 to cysteine 214.

The protein belongs to the somatotropin/prolactin family.

It localises to the secreted. Functionally, plays an important role in growth control. Its major role in stimulating body growth is to stimulate the liver and other tissues to secrete IGF1. It stimulates both the differentiation and proliferation of myoblasts. It also stimulates amino acid uptake and protein synthesis in muscle and other tissues. The chain is Somatotropin (GH1) from Oryctolagus cuniculus (Rabbit).